The chain runs to 398 residues: Tryptophan synthase beta chain (398 aa).

Lys92 carries the N6-(pyridoxal phosphate)lysine modification.

Belongs to the TrpB family. As to quaternary structure, tetramer of two alpha and two beta chains. Pyridoxal 5'-phosphate is required as a cofactor.

The enzyme catalyses (1S,2R)-1-C-(indol-3-yl)glycerol 3-phosphate + L-serine = D-glyceraldehyde 3-phosphate + L-tryptophan + H2O. Its pathway is amino-acid biosynthesis; L-tryptophan biosynthesis; L-tryptophan from chorismate: step 5/5. Functionally, the beta subunit is responsible for the synthesis of L-tryptophan from indole and L-serine. This is Tryptophan synthase beta chain from Nitrosospira multiformis (strain ATCC 25196 / NCIMB 11849 / C 71).